Reading from the N-terminus, the 338-residue chain is UDP-glucose 4-epimerase (338 aa).

NAD(+)-binding positions include 11-12 (YI), 31-36 (DNLCNS), 58-59 (DI), 80-84 (FAGLK), Asn-99, Ser-124, Tyr-149, Lys-153, and Phe-178. Residues Ser-124 and Tyr-149 each coordinate substrate. Catalysis depends on Tyr-149, which acts as the Proton acceptor. Substrate is bound by residues Asn-179, 199–200 (NL), 216–218 (AVF), Arg-231, 292–295 (RDGD), and Tyr-299.

It belongs to the NAD(P)-dependent epimerase/dehydratase family. Homodimer. The cofactor is NAD(+).

The enzyme catalyses UDP-alpha-D-glucose = UDP-alpha-D-galactose. The protein operates within carbohydrate metabolism; galactose metabolism. Functionally, involved in the metabolism of galactose. Catalyzes the conversion of UDP-galactose (UDP-Gal) to UDP-glucose (UDP-Glc) through a mechanism involving the transient reduction of NAD. This is UDP-glucose 4-epimerase (galE) from Salmonella typhi.